Consider the following 506-residue polypeptide: Maturase K (506 aa).

The protein belongs to the intron maturase 2 family. MatK subfamily.

It localises to the plastid. The protein localises to the chloroplast. Its function is as follows. Usually encoded in the trnK tRNA gene intron. Probably assists in splicing its own and other chloroplast group II introns. The chain is Maturase K from Rhododendron tomentosum (Marsh Labrador tea).